Here is a 426-residue protein sequence, read N- to C-terminus: Histidine--tRNA ligase (426 aa).

Belongs to the class-II aminoacyl-tRNA synthetase family. As to quaternary structure, homodimer.

Its subcellular location is the cytoplasm. It carries out the reaction tRNA(His) + L-histidine + ATP = L-histidyl-tRNA(His) + AMP + diphosphate + H(+). The polypeptide is Histidine--tRNA ligase (hisS) (Streptococcus dysgalactiae subsp. equisimilis (Streptococcus equisimilis)).